Here is a 272-residue protein sequence, read N- to C-terminus: HTH-type transcriptional repressor AllR (272 aa).

Positions 1-20 (MTEVRRRGRPGQAEPTAQKG) are disordered. In terms of domain architecture, HTH iclR-type spans 21-83 (AQALERGIAI…SQLGWWHIGL (63 aa)). Residues 43–62 (VSDISGSLDLPLSTTFRLLK) constitute a DNA-binding region (H-T-H motif). An IclR-ED domain is found at 98-267 (VLSVAGPFMH…AKDISTALGL (170 aa)). Residues 154–156 (SGA), Asp207, Cys217, and 234–236 (SIS) contribute to the glyoxylate site.

Its function is as follows. Negative regulator of allantoin and glyoxylate utilization operons. Binds to the gcl promoter and to the allS-allA intergenic region. The chain is HTH-type transcriptional repressor AllR (allR) from Salmonella paratyphi A (strain ATCC 9150 / SARB42).